The primary structure comprises 190 residues: Vespryn-21 (190 aa).

The N-terminal stretch at 1-20 (MLLFTLCFFADLENGGKALA) is a signal peptide. Residues 21 to 127 (SPPGKWQKAD…LIWQRGLWFL (107 aa)) enclose the B30.2/SPRY domain. Positions 128–190 (QRLETDSDKL…LGGGVSLTNL (63 aa)) are excised as a propeptide.

Belongs to the ohanin/vespryn family. In terms of tissue distribution, expressed by the venom gland.

It localises to the secreted. Functionally, neurotoxin that produces dose-dependent hypolocomotion and hyperalgesia in mice. May directly act on the central nervous system, as it is 6500-fold more potent when administered intracerebroventricularly than intraperitoneal. This is Vespryn-21 from Drysdalia coronoides (White-lipped snake).